Reading from the N-terminus, the 160-residue chain is MPFERFVQTGRIAKASAGPLKGRLVAIVDVIDQNRVLVDGPLTGVPRQEYRLNNLHLTKYRIKFPYTAPTRIVRKAWVDSDLKAQWKVSPWSVKAQNICKRSQLNDFDRFKLRYAKRQRNKLLTIAFNTLKKRTKSDGTPRILKKDRRERLRAEKAKAKK.

The tract at residues 136–160 (SDGTPRILKKDRRERLRAEKAKAKK) is disordered. A compositionally biased stretch (basic and acidic residues) spans 146–160 (DRRERLRAEKAKAKK).

The protein belongs to the eukaryotic ribosomal protein eL14 family.

In Drosophila virilis (Fruit fly), this protein is Large ribosomal subunit protein eL14 (RpL14).